Here is a 282-residue protein sequence, read N- to C-terminus: Ribosomal protein L11 methyltransferase (282 aa).

T133, G154, D175, and N216 together coordinate S-adenosyl-L-methionine.

This sequence belongs to the methyltransferase superfamily. PrmA family.

Its subcellular location is the cytoplasm. The enzyme catalyses L-lysyl-[protein] + 3 S-adenosyl-L-methionine = N(6),N(6),N(6)-trimethyl-L-lysyl-[protein] + 3 S-adenosyl-L-homocysteine + 3 H(+). In terms of biological role, methylates ribosomal protein L11. In Campylobacter jejuni subsp. doylei (strain ATCC BAA-1458 / RM4099 / 269.97), this protein is Ribosomal protein L11 methyltransferase.